Reading from the N-terminus, the 107-residue chain is Holo-[acyl-carrier-protein] synthase (107 aa).

Mg(2+) is bound by residues Asp10 and Glu54.

This sequence belongs to the P-Pant transferase superfamily. AcpS family. It depends on Mg(2+) as a cofactor.

The protein localises to the cytoplasm. It catalyses the reaction apo-[ACP] + CoA = holo-[ACP] + adenosine 3',5'-bisphosphate + H(+). Functionally, transfers the 4'-phosphopantetheine moiety from coenzyme A to a Ser of acyl-carrier-protein. The protein is Holo-[acyl-carrier-protein] synthase of Mycoplasma mobile (strain ATCC 43663 / 163K / NCTC 11711) (Mesomycoplasma mobile).